The primary structure comprises 574 residues: Phosphoenolpyruvate-protein phosphotransferase (574 aa).

Catalysis depends on His-190, which acts as the Tele-phosphohistidine intermediate. Residues Arg-297 and Arg-333 each contribute to the phosphoenolpyruvate site. Positions 432 and 456 each coordinate Mg(2+). Phosphoenolpyruvate is bound by residues 455 to 456 (ND) and Arg-466. Residue Cys-503 is the Proton donor of the active site.

The protein belongs to the PEP-utilizing enzyme family. As to quaternary structure, homodimer. Requires Mg(2+) as cofactor.

Its subcellular location is the cytoplasm. The enzyme catalyses L-histidyl-[protein] + phosphoenolpyruvate = N(pros)-phospho-L-histidyl-[protein] + pyruvate. Its function is as follows. General (non sugar-specific) component of the phosphoenolpyruvate-dependent sugar phosphotransferase system (sugar PTS). This major carbohydrate active-transport system catalyzes the phosphorylation of incoming sugar substrates concomitantly with their translocation across the cell membrane. Enzyme I transfers the phosphoryl group from phosphoenolpyruvate (PEP) to the phosphoryl carrier protein (HPr). The sequence is that of Phosphoenolpyruvate-protein phosphotransferase (ptsI) from Latilactobacillus sakei (Lactobacillus sakei).